We begin with the raw amino-acid sequence, 588 residues long: Calicin (588 aa).

The region spanning 28-98 (WDIALTVDHH…FYSGKVVISE (71 aa)) is the BTB domain. Serine 149 carries the post-translational modification Phosphoserine. Kelch repeat units lie at residues 280–327 (SVVI…SAGR), 328–375 (YIYI…TCGG), 377–423 (VYSV…TRGD), 425–475 (NLYI…SFHQ), 476–525 (DNIL…VGDN), and 526–580 (KVFV…LAKL).

As to quaternary structure, interacts with CYLC1; the interaction may be relevant for proper acrosome attachment to the nuclear envelope. Expressed in testis and in spermatozoa (at protein level).

The protein resides in the cytoplasm. It is found in the cytoskeleton. Its subcellular location is the perinuclear theca. The protein localises to the calyx. In terms of biological role, required for both nuclear and acrosomal shaping during spermiogenesis. The chain is Calicin (CCIN) from Bos taurus (Bovine).